The chain runs to 235 residues: Small ribosomal subunit protein eS4 (235 aa).

An S4 RNA-binding domain is found at 38–99 (VTLLTIIRDY…GESYRVVYNN (62 aa)).

The protein belongs to the eukaryotic ribosomal protein eS4 family.

The protein is Small ribosomal subunit protein eS4 (rps4e) of Thermoplasma volcanium (strain ATCC 51530 / DSM 4299 / JCM 9571 / NBRC 15438 / GSS1).